Consider the following 129-residue polypeptide: Small ribosomal subunit protein uS11 (129 aa).

The protein belongs to the universal ribosomal protein uS11 family. In terms of assembly, part of the 30S ribosomal subunit. Interacts with proteins S7 and S18. Binds to IF-3.

In terms of biological role, located on the platform of the 30S subunit, it bridges several disparate RNA helices of the 16S rRNA. Forms part of the Shine-Dalgarno cleft in the 70S ribosome. The polypeptide is Small ribosomal subunit protein uS11 (Agrobacterium fabrum (strain C58 / ATCC 33970) (Agrobacterium tumefaciens (strain C58))).